We begin with the raw amino-acid sequence, 142 residues long: Putative pre-16S rRNA nuclease (142 aa).

This sequence belongs to the YqgF nuclease family.

It localises to the cytoplasm. Its function is as follows. Could be a nuclease involved in processing of the 5'-end of pre-16S rRNA. The chain is Putative pre-16S rRNA nuclease from Malacoplasma penetrans (strain HF-2) (Mycoplasma penetrans).